The sequence spans 107 residues: Regulatory protein SoxS (107 aa).

Residues 8–106 (QDLIAWIDEH…DRTPSDYRHR (99 aa)) form the HTH araC/xylS-type domain. DNA-binding regions (H-T-H motif) lie at residues 25 to 46 (DVVA…RTVT) and 73 to 96 (IFDI…RRQF).

It is found in the cytoplasm. Transcriptional activator of the superoxide response regulon of E.coli that includes at least 10 genes such as sodA, nfo, zwf and micF. Binds the DNA sequence 5'-GCACN(7)CAA-3'. It also facilitates the subsequent binding of RNA polymerase to the micF and the nfo promoters. This Escherichia coli O157:H7 protein is Regulatory protein SoxS (soxS).